The sequence spans 376 residues: Sulfate/thiosulfate import ATP-binding protein CysA 1 (376 aa).

Positions 3–237 (IRLTNISKKF…PNSRFVFDFL (235 aa)) constitute an ABC transporter domain. 35–42 (GPSGSGKT) provides a ligand contact to ATP.

Belongs to the ABC transporter superfamily. Sulfate/tungstate importer (TC 3.A.1.6) family. In terms of assembly, the complex is composed of two ATP-binding proteins (CysA), two transmembrane proteins (CysT and CysW) and a solute-binding protein (CysP).

The protein resides in the cell inner membrane. The catalysed reaction is sulfate(out) + ATP + H2O = sulfate(in) + ADP + phosphate + H(+). It catalyses the reaction thiosulfate(out) + ATP + H2O = thiosulfate(in) + ADP + phosphate + H(+). Its function is as follows. Part of the ABC transporter complex CysAWTP involved in sulfate/thiosulfate import. Responsible for energy coupling to the transport system. The protein is Sulfate/thiosulfate import ATP-binding protein CysA 1 of Shewanella oneidensis (strain ATCC 700550 / JCM 31522 / CIP 106686 / LMG 19005 / NCIMB 14063 / MR-1).